A 121-amino-acid polypeptide reads, in one-letter code: Large ribosomal subunit protein uL14 (121 aa).

Belongs to the universal ribosomal protein uL14 family. In terms of assembly, part of the 50S ribosomal subunit. Forms a cluster with proteins L3 and L19. In the 70S ribosome, L14 and L19 interact and together make contacts with the 16S rRNA in bridges B5 and B8.

In terms of biological role, binds to 23S rRNA. Forms part of two intersubunit bridges in the 70S ribosome. The chain is Large ribosomal subunit protein uL14 from Aquifex aeolicus (strain VF5).